A 183-amino-acid polypeptide reads, in one-letter code: Translation initiation factor IF-3 (183 aa).

It belongs to the IF-3 family. Monomer.

The protein resides in the cytoplasm. Its function is as follows. IF-3 binds to the 30S ribosomal subunit and shifts the equilibrium between 70S ribosomes and their 50S and 30S subunits in favor of the free subunits, thus enhancing the availability of 30S subunits on which protein synthesis initiation begins. This is Translation initiation factor IF-3 from Aliivibrio salmonicida (strain LFI1238) (Vibrio salmonicida (strain LFI1238)).